The following is a 76-amino-acid chain: MKFKLQDHMLVPKHEVLSKEEAEELLKILGIGKEQLPKIKADDPIAKEIGAKPGDIVKITRKSLTAGESVFYRLVV.

This sequence belongs to the archaeal Rpo5/eukaryotic RPB5 RNA polymerase subunit family. As to quaternary structure, part of the RNA polymerase complex.

It is found in the cytoplasm. The enzyme catalyses RNA(n) + a ribonucleoside 5'-triphosphate = RNA(n+1) + diphosphate. Its function is as follows. DNA-dependent RNA polymerase (RNAP) catalyzes the transcription of DNA into RNA using the four ribonucleoside triphosphates as substrates. The protein is DNA-directed RNA polymerase subunit Rpo5 of Archaeoglobus fulgidus (strain ATCC 49558 / DSM 4304 / JCM 9628 / NBRC 100126 / VC-16).